A 1205-amino-acid chain; its full sequence is MTDVSSPAGGAASPVEMTTSSSPAATTSASSSKPLTNGANKTTISTTAGGVAPGDVPGTGSGAIPASSSSGNQVKLEHHHRQSNNNRPAATNRSSETKLRSPAGESDGASRLMTPAGSSSSPSQSPSQTQASIQTQTSQQDRLTKASTTASQQDVDEVARLFEEKPEAFEKWLTERAPPEALSRLQEFIENRKPHKRPSVTSDLFQQWMAASPTVQQKSPRSLSNSSASSLPECRRHLMDLDEGELFMELIRDVANELDIDVLCHKILVNVGLLTHADRGSLFLAKGTPTNKYLVAKLFDVTQKTALKDAVARASAEEIIIPFGIGIAGMVAQTKQMINIKEAYKDARFNCEIDLKTGYKTNAILCMPICNYEGDIIGVAQIINKTNGCMEFDEHDVEIFRRYLTFCGIGIQNAQLFEMSVQEYRRNQILLNLARSIFEEQNNLECLVTKIMTEARELLKCERCSVFLVDLDCCEASHLEKIIEKPNQPATRAIKSADSFEEKKMRNRFTVLFELGGEYQAANVSRPSVSELSSSTLAQIAQFVATTGQTVNICDVIEWVRDHNQIRAEDEIDSTQAILCMPIMNAQKKVIGVAQLINKANGVPFTDSDASIFEAFAIFCGLGIHNTQMYENACKLMAKQKVALECLSYHATASQDQTEKLTQDVIAEAESYNLYSFTFTDFELVDDDTCRAVLRMFMQCNLVSQFQIPYDVLCRWVLSVRKNYRPVKYHNWRHALNVAQTMFAMLKTGKMERFMTDLEILGLLVACLCHDLDHRGTNNAFQTKTESPLAILYTTSTMEHHHFDQCVMILNSEGNNIFQTGFAGLGAGTFGSGRGTGGGSNSNFPGDRVLQIARRTIFFFVPELDAEDDVVDSVVDSVVELSVVVLVLDSVLVAALSPEDYRSVMKTVESAILSTDLAMYFKKRNAFLELVENGEFDWQGEEKKDLLCGMMMTACDVSAIAKPWEVQHKVAKLVADEFFDQGDLEKLQLNTQPVAMMDRERKDELPKMQVGFIDVICLPLYRVLCDTFPWITPLYEGTLENRRNWQDLAEKVEMGLTWIDHDTIDKPVEEFAACADEEIKDIEFTVTTLNCNQQSQHGSEDSHTPEHQRSGSRLSMKKTGALGKAVRSKLSKTLYNSMDGSKPKTSLKLLESHVSEDMDDKSPTSPSQPQASGSMGRMSASSSTSSAGGQMVDKSKKRSKLCALL.

The segment at 1-153 (MTDVSSPAGG…TKASTTASQQ (153 aa)) is disordered. Residues 18-32 (TTSSSPAATTSASSS) show a composition bias toward low complexity. A compositionally biased stretch (polar residues) spans 33–48 (KPLTNGANKTTISTTA). The span at 62–71 (GAIPASSSSG) shows a compositional bias: low complexity. The span at 83 to 94 (SNNNRPAATNRS) shows a compositional bias: polar residues. The segment covering 118–140 (SSSSPSQSPSQTQASIQTQTSQQ) has biased composition (low complexity). 2 consecutive GAF domains span residues 259 to 411 (DIDV…GIGI) and 443 to 624 (NLEC…GLGI). Positions 654-1052 (SQDQTEKLTQ…RNWQDLAEKV (399 aa)) constitute a PDEase domain. H730 (proton donor) is an active-site residue. Residues H734, H770, D771, and D956 each contribute to the a divalent metal cation site. Disordered stretches follow at residues 1093–1122 (QQSQ…TGAL) and 1152–1205 (SHVS…CALL). Basic and acidic residues-rich tracts occupy residues 1098-1109 (GSEDSHTPEHQR) and 1152-1162 (SHVSEDMDDKS). Over residues 1171 to 1191 (ASGSMGRMSASSSTSSAGGQM) the composition is skewed to low complexity. Over residues 1195–1205 (SKKRSKLCALL) the composition is skewed to basic residues. The residue at position 1202 (C1202) is a Cysteine methyl ester. Residue C1202 is the site of S-farnesyl cysteine attachment. The propeptide at 1203 to 1205 (ALL) is removed in mature form.

Belongs to the cyclic nucleotide phosphodiesterase family. Interacts with PrBP. It depends on a divalent metal cation as a cofactor.

Its subcellular location is the cell membrane. It carries out the reaction 3',5'-cyclic GMP + H2O = GMP + H(+). Its function is as follows. Has a role regulating cGMP transport in Malpighian tubule principal cells. The polypeptide is cGMP-specific 3',5'-cyclic phosphodiesterase (Drosophila sechellia (Fruit fly)).